Consider the following 208-residue polypeptide: MTQKNGPLRVGIGGPVGSGKTTLTEKLCKAMRDKYSVAIITNDIYTQEDALILARRQALSEDRIIGVETGGCPHTAIREDASINLQAVVEMTRRFPDLDVVFIESGGDNLAATFSPDLADLTLYVISVCQGEEIPRKGGPGITRSDFLVINKSDLAPYVHVDLEVMEADAMRMRAKRPFGFTDLHRGKGVQEIIDFIVENGGLEPRSN.

A GTP-binding site is contributed by 14–21 (GPVGSGKT).

This sequence belongs to the SIMIBI class G3E GTPase family. UreG subfamily. Homodimer. UreD, UreF and UreG form a complex that acts as a GTP-hydrolysis-dependent molecular chaperone, activating the urease apoprotein by helping to assemble the nickel containing metallocenter of UreC. The UreE protein probably delivers the nickel.

Its subcellular location is the cytoplasm. Facilitates the functional incorporation of the urease nickel metallocenter. This process requires GTP hydrolysis, probably effectuated by UreG. The sequence is that of Urease accessory protein UreG 1 from Brucella ovis (strain ATCC 25840 / 63/290 / NCTC 10512).